A 200-amino-acid chain; its full sequence is ATP synthase subunit b 1 (200 aa).

A helical membrane pass occupies residues 14–34 (AAVIVVVSLMAFCCAGFAVAA).

It belongs to the ATPase B chain family. As to quaternary structure, F-type ATPases have 2 components, F(1) - the catalytic core - and F(0) - the membrane proton channel. F(1) has five subunits: alpha(3), beta(3), gamma(1), delta(1), epsilon(1). F(0) has three main subunits: a(1), b(2) and c(10-14). The alpha and beta chains form an alternating ring which encloses part of the gamma chain. F(1) is attached to F(0) by a central stalk formed by the gamma and epsilon chains, while a peripheral stalk is formed by the delta and b chains.

The protein localises to the cell inner membrane. Its function is as follows. F(1)F(0) ATP synthase produces ATP from ADP in the presence of a proton or sodium gradient. F-type ATPases consist of two structural domains, F(1) containing the extramembraneous catalytic core and F(0) containing the membrane proton channel, linked together by a central stalk and a peripheral stalk. During catalysis, ATP synthesis in the catalytic domain of F(1) is coupled via a rotary mechanism of the central stalk subunits to proton translocation. Component of the F(0) channel, it forms part of the peripheral stalk, linking F(1) to F(0). This chain is ATP synthase subunit b 1, found in Desulfosudis oleivorans (strain DSM 6200 / JCM 39069 / Hxd3) (Desulfococcus oleovorans).